The following is a 173-amino-acid chain: Peptide methionine sulfoxide reductase MsrA (173 aa).

The active site involves cysteine 10.

It belongs to the MsrA Met sulfoxide reductase family.

It catalyses the reaction L-methionyl-[protein] + [thioredoxin]-disulfide + H2O = L-methionyl-(S)-S-oxide-[protein] + [thioredoxin]-dithiol. The catalysed reaction is [thioredoxin]-disulfide + L-methionine + H2O = L-methionine (S)-S-oxide + [thioredoxin]-dithiol. In terms of biological role, has an important function as a repair enzyme for proteins that have been inactivated by oxidation. Catalyzes the reversible oxidation-reduction of methionine sulfoxide in proteins to methionine. The protein is Peptide methionine sulfoxide reductase MsrA of Acinetobacter baumannii (strain AB307-0294).